The following is a 468-amino-acid chain: Probable xyloglucan galactosyltransferase GT13 (468 aa).

The Cytoplasmic portion of the chain corresponds to methionine 1–lysine 18. A helical; Signal-anchor for type II membrane protein transmembrane segment spans residues valine 19–leucine 35. Residues histidine 36 to isoleucine 468 lie on the Lumenal side of the membrane. Asparagine 53, asparagine 116, asparagine 153, asparagine 240, and asparagine 412 each carry an N-linked (GlcNAc...) asparagine glycan.

The protein belongs to the glycosyltransferase 47 family. In terms of tissue distribution, expressed in roots, hypocotyls, cotyledons, leaves, stems, petals and carpels.

Its subcellular location is the golgi apparatus membrane. In terms of biological role, functions in xyloglucan synthesis by adding side chains to the xylosylated glucan backbone. Involved in the galactosylation of hemicellulose xyloglucan. This Arabidopsis thaliana (Mouse-ear cress) protein is Probable xyloglucan galactosyltransferase GT13.